Here is a 503-residue protein sequence, read N- to C-terminus: Aspartyl/glutamyl-tRNA(Asn/Gln) amidotransferase subunit B (503 aa).

It belongs to the GatB/GatE family. GatB subfamily. In terms of assembly, heterotrimer of A, B and C subunits.

It carries out the reaction L-glutamyl-tRNA(Gln) + L-glutamine + ATP + H2O = L-glutaminyl-tRNA(Gln) + L-glutamate + ADP + phosphate + H(+). It catalyses the reaction L-aspartyl-tRNA(Asn) + L-glutamine + ATP + H2O = L-asparaginyl-tRNA(Asn) + L-glutamate + ADP + phosphate + 2 H(+). In terms of biological role, allows the formation of correctly charged Asn-tRNA(Asn) or Gln-tRNA(Gln) through the transamidation of misacylated Asp-tRNA(Asn) or Glu-tRNA(Gln) in organisms which lack either or both of asparaginyl-tRNA or glutaminyl-tRNA synthetases. The reaction takes place in the presence of glutamine and ATP through an activated phospho-Asp-tRNA(Asn) or phospho-Glu-tRNA(Gln). The sequence is that of Aspartyl/glutamyl-tRNA(Asn/Gln) amidotransferase subunit B from Rhodococcus erythropolis (strain PR4 / NBRC 100887).